A 379-amino-acid polypeptide reads, in one-letter code: S-adenosylmethionine synthase (379 aa).

His-15 contacts ATP. Asp-17 is a Mg(2+) binding site. Glu-43 contributes to the K(+) binding site. L-methionine contacts are provided by Glu-56 and Gln-99. A flexible loop region spans residues 99-109 (QSPDITQGVDR). ATP is bound by residues 164–166 (DAK), 230–231 (RF), Asp-239, 245–246 (RK), Ala-262, and Lys-266. Residue Asp-239 coordinates L-methionine. An L-methionine-binding site is contributed by Lys-270.

Belongs to the AdoMet synthase family. Homotetramer; dimer of dimers. Mg(2+) serves as cofactor. Requires K(+) as cofactor.

It is found in the cytoplasm. It carries out the reaction L-methionine + ATP + H2O = S-adenosyl-L-methionine + phosphate + diphosphate. The protein operates within amino-acid biosynthesis; S-adenosyl-L-methionine biosynthesis; S-adenosyl-L-methionine from L-methionine: step 1/1. In terms of biological role, catalyzes the formation of S-adenosylmethionine (AdoMet) from methionine and ATP. The overall synthetic reaction is composed of two sequential steps, AdoMet formation and the subsequent tripolyphosphate hydrolysis which occurs prior to release of AdoMet from the enzyme. This chain is S-adenosylmethionine synthase, found in Buchnera aphidicola subsp. Schizaphis graminum (strain Sg).